The sequence spans 71 residues: Putative antitoxin VapB14 (71 aa).

In terms of biological role, putative antitoxin component of a possible type II toxin-antitoxin (TA) system. The cognate toxin is VapB14. This is Putative antitoxin VapB14 (vapB14) from Mycobacterium tuberculosis (strain ATCC 25618 / H37Rv).